The primary structure comprises 60 residues: Large ribosomal subunit protein uL30 (60 aa).

The protein belongs to the universal ribosomal protein uL30 family. In terms of assembly, part of the 50S ribosomal subunit.

The protein is Large ribosomal subunit protein uL30 of Ligilactobacillus salivarius (strain UCC118) (Lactobacillus salivarius).